A 154-amino-acid polypeptide reads, in one-letter code: Holo-[acyl-carrier-protein] synthase (154 aa).

Residues D8 and E57 each coordinate Mg(2+).

Belongs to the P-Pant transferase superfamily. AcpS family. The cofactor is Mg(2+).

The protein resides in the cytoplasm. The enzyme catalyses apo-[ACP] + CoA = holo-[ACP] + adenosine 3',5'-bisphosphate + H(+). In terms of biological role, transfers the 4'-phosphopantetheine moiety from coenzyme A to a Ser of acyl-carrier-protein. This chain is Holo-[acyl-carrier-protein] synthase, found in Nitrosococcus oceani (strain ATCC 19707 / BCRC 17464 / JCM 30415 / NCIMB 11848 / C-107).